Reading from the N-terminus, the 691-residue chain is Elongation factor G (691 aa).

The tr-type G domain maps to 8–283 (EDYRNFGIMA…AVVDFLPNPT (276 aa)). GTP is bound by residues 17–24 (AHIDAGKT), 81–85 (DTPGH), and 135–138 (NKMD).

This sequence belongs to the TRAFAC class translation factor GTPase superfamily. Classic translation factor GTPase family. EF-G/EF-2 subfamily.

Its subcellular location is the cytoplasm. Catalyzes the GTP-dependent ribosomal translocation step during translation elongation. During this step, the ribosome changes from the pre-translocational (PRE) to the post-translocational (POST) state as the newly formed A-site-bound peptidyl-tRNA and P-site-bound deacylated tRNA move to the P and E sites, respectively. Catalyzes the coordinated movement of the two tRNA molecules, the mRNA and conformational changes in the ribosome. The protein is Elongation factor G of Maricaulis maris (strain MCS10) (Caulobacter maris).